We begin with the raw amino-acid sequence, 549 residues long: Calcium-dependent protein kinase 5 (549 aa).

Glycine 2 carries the N-myristoyl glycine lipid modification. Positions 43–69 (DEPAGKKAPRGSAAAADAPHAASMKRG) are disordered. Over residues 52 to 64 (RGSAAAADAPHAA) the composition is skewed to low complexity. Positions 92–350 (YALGRKLGQG…AHEVLCHPWI (259 aa)) constitute a Protein kinase domain. ATP is bound by residues 98 to 106 (LGQGQFGTT) and lysine 121. Aspartate 216 (proton acceptor) is an active-site residue. Positions 356 to 386 (APDRPLDPAVLSRIKQFSAMNKLKKMALRVI) are autoinhibitory domain. 4 consecutive EF-hand domains span residues 393–428 (EEIA…YGST), 429–464 (LKDT…LNKL), 465–500 (EREE…HNMP), and 501–534 (DAFL…GNMG). Aspartate 406, aspartate 408, serine 410, glutamate 417, aspartate 442, aspartate 444, serine 446, threonine 448, glutamate 453, aspartate 478, aspartate 480, serine 482, tyrosine 484, glutamate 489, aspartate 512, aspartate 514, aspartate 516, arginine 518, and glutamate 523 together coordinate Ca(2+).

It belongs to the protein kinase superfamily. Ser/Thr protein kinase family. CDPK subfamily.

It is found in the membrane. It catalyses the reaction L-seryl-[protein] + ATP = O-phospho-L-seryl-[protein] + ADP + H(+). It carries out the reaction L-threonyl-[protein] + ATP = O-phospho-L-threonyl-[protein] + ADP + H(+). Activated by calcium. Autophosphorylation may play an important role in the regulation of the kinase activity. May play a role in signal transduction pathways that involve calcium as a second messenger. The sequence is that of Calcium-dependent protein kinase 5 from Oryza sativa subsp. japonica (Rice).